Here is a 427-residue protein sequence, read N- to C-terminus: Serine--tRNA ligase (427 aa).

Residue 232-234 (TAE) participates in L-serine binding. Residue 263–265 (RSE) participates in ATP binding. Residue Glu-286 participates in L-serine binding. Residue 350–353 (EISS) coordinates ATP. Ser-385 provides a ligand contact to L-serine.

This sequence belongs to the class-II aminoacyl-tRNA synthetase family. Type-1 seryl-tRNA synthetase subfamily. Homodimer. The tRNA molecule binds across the dimer.

It is found in the cytoplasm. It carries out the reaction tRNA(Ser) + L-serine + ATP = L-seryl-tRNA(Ser) + AMP + diphosphate + H(+). The catalysed reaction is tRNA(Sec) + L-serine + ATP = L-seryl-tRNA(Sec) + AMP + diphosphate + H(+). The protein operates within aminoacyl-tRNA biosynthesis; selenocysteinyl-tRNA(Sec) biosynthesis; L-seryl-tRNA(Sec) from L-serine and tRNA(Sec): step 1/1. In terms of biological role, catalyzes the attachment of serine to tRNA(Ser). Is also able to aminoacylate tRNA(Sec) with serine, to form the misacylated tRNA L-seryl-tRNA(Sec), which will be further converted into selenocysteinyl-tRNA(Sec). The protein is Serine--tRNA ligase of Lacticaseibacillus casei (strain BL23) (Lactobacillus casei).